Here is a 195-residue protein sequence, read N- to C-terminus: Holliday junction branch migration complex subunit RuvA (195 aa).

A domain I region spans residues 1 to 63 (MIASVRGEVI…EDSMTLYGFV (63 aa)). The domain II stretch occupies residues 64–142 (DGDARDLFLT…PVSAGGGAAV (79 aa)). Positions 143-150 (GGHAIRGP) are flexible linker. The interval 150–195 (PVVEALVGLGFAAKQAEEATDKVLANDPEATTSSALRAALSMLGKK) is domain III.

It belongs to the RuvA family. Homotetramer. Forms an RuvA(8)-RuvB(12)-Holliday junction (HJ) complex. HJ DNA is sandwiched between 2 RuvA tetramers; dsDNA enters through RuvA and exits via RuvB. An RuvB hexamer assembles on each DNA strand where it exits the tetramer. Each RuvB hexamer is contacted by two RuvA subunits (via domain III) on 2 adjacent RuvB subunits; this complex drives branch migration. In the full resolvosome a probable DNA-RuvA(4)-RuvB(12)-RuvC(2) complex forms which resolves the HJ.

The protein localises to the cytoplasm. In terms of biological role, the RuvA-RuvB-RuvC complex processes Holliday junction (HJ) DNA during genetic recombination and DNA repair, while the RuvA-RuvB complex plays an important role in the rescue of blocked DNA replication forks via replication fork reversal (RFR). RuvA specifically binds to HJ cruciform DNA, conferring on it an open structure. The RuvB hexamer acts as an ATP-dependent pump, pulling dsDNA into and through the RuvAB complex. HJ branch migration allows RuvC to scan DNA until it finds its consensus sequence, where it cleaves and resolves the cruciform DNA. This Mycolicibacterium smegmatis (strain ATCC 700084 / mc(2)155) (Mycobacterium smegmatis) protein is Holliday junction branch migration complex subunit RuvA.